Reading from the N-terminus, the 158-residue chain is NADPH-dependent 7-cyano-7-deazaguanine reductase (158 aa).

The disordered stretch occupies residues 1–37; sequence MAKRSIKSETSPELQLGRPVTAPDSPETARLDRVPNP. The segment covering 27-37 has biased composition (basic and acidic residues); that stretch reads ETARLDRVPNP. The active-site Thioimide intermediate is Cys56. Asp63 acts as the Proton donor in catalysis. Substrate contacts are provided by residues 78-80 and 97-98; these read VES and HE.

The protein belongs to the GTP cyclohydrolase I family. QueF type 1 subfamily.

The protein localises to the cytoplasm. It catalyses the reaction 7-aminomethyl-7-carbaguanine + 2 NADP(+) = 7-cyano-7-deazaguanine + 2 NADPH + 3 H(+). Its pathway is tRNA modification; tRNA-queuosine biosynthesis. Catalyzes the NADPH-dependent reduction of 7-cyano-7-deazaguanine (preQ0) to 7-aminomethyl-7-deazaguanine (preQ1). In Bradyrhizobium sp. (strain BTAi1 / ATCC BAA-1182), this protein is NADPH-dependent 7-cyano-7-deazaguanine reductase.